We begin with the raw amino-acid sequence, 177 residues long: Large ribosomal subunit protein uL6 (177 aa).

It belongs to the universal ribosomal protein uL6 family. In terms of assembly, part of the 50S ribosomal subunit.

This protein binds to the 23S rRNA, and is important in its secondary structure. It is located near the subunit interface in the base of the L7/L12 stalk, and near the tRNA binding site of the peptidyltransferase center. This Sinorhizobium fredii (strain NBRC 101917 / NGR234) protein is Large ribosomal subunit protein uL6.